The following is a 276-amino-acid chain: NADPH-dependent 7-cyano-7-deazaguanine reductase (276 aa).

83–85 (IES) serves as a coordination point for substrate. 85–86 (SK) provides a ligand contact to NADPH. The active-site Thioimide intermediate is Cys-184. The active-site Proton donor is the Asp-191. 223 to 224 (HE) contributes to the substrate binding site. 252 to 253 (RG) contacts NADPH.

The protein belongs to the GTP cyclohydrolase I family. QueF type 2 subfamily. As to quaternary structure, homodimer.

It localises to the cytoplasm. The enzyme catalyses 7-aminomethyl-7-carbaguanine + 2 NADP(+) = 7-cyano-7-deazaguanine + 2 NADPH + 3 H(+). It participates in tRNA modification; tRNA-queuosine biosynthesis. In terms of biological role, catalyzes the NADPH-dependent reduction of 7-cyano-7-deazaguanine (preQ0) to 7-aminomethyl-7-deazaguanine (preQ1). This is NADPH-dependent 7-cyano-7-deazaguanine reductase from Pseudomonas fluorescens (strain ATCC BAA-477 / NRRL B-23932 / Pf-5).